The chain runs to 357 residues: Protein-glutamate methylesterase/protein-glutamine glutaminase (357 aa).

A Response regulatory domain is found at 3–120 (RVLVVDDSAF…SLDLYKIKEQ (118 aa)). Aspartate 54 bears the 4-aspartylphosphate mark. A CheB-type methylesterase domain is found at 161–355 (PGTGRQIVCI…ASITSCVKKE (195 aa)). Catalysis depends on residues serine 173, histidine 200, and aspartate 296.

Belongs to the CheB family. In terms of processing, phosphorylated by CheA. Phosphorylation of the N-terminal regulatory domain activates the methylesterase activity.

Its subcellular location is the cytoplasm. It catalyses the reaction [protein]-L-glutamate 5-O-methyl ester + H2O = L-glutamyl-[protein] + methanol + H(+). It carries out the reaction L-glutaminyl-[protein] + H2O = L-glutamyl-[protein] + NH4(+). Functionally, involved in the modulation of the chemotaxis system; catalyzes the demethylation of specific methylglutamate residues introduced into the chemoreceptors (methyl-accepting chemotaxis proteins) by CheR. B.subtilis has an effective methylation-independent adaptation system but must utilize the methylation system for adaptation to high concentrations of attractant. The chain is Protein-glutamate methylesterase/protein-glutamine glutaminase from Bacillus subtilis (strain 168).